Here is a 539-residue protein sequence, read N- to C-terminus: Hydroxylamine reductase (539 aa).

Positions 3, 6, 14, and 20 each coordinate [4Fe-4S] cluster. Positions 232, 256, 300, 392, 420, 445, 480, and 482 each coordinate hybrid [4Fe-2O-2S] cluster. Cys-392 carries the post-translational modification Cysteine persulfide.

The protein belongs to the HCP family. The cofactor is [4Fe-4S] cluster. Requires hybrid [4Fe-2O-2S] cluster as cofactor.

The protein resides in the cytoplasm. The catalysed reaction is A + NH4(+) + H2O = hydroxylamine + AH2 + H(+). Its function is as follows. Catalyzes the reduction of hydroxylamine to form NH(3) and H(2)O. The sequence is that of Hydroxylamine reductase from Chlorobaculum tepidum (strain ATCC 49652 / DSM 12025 / NBRC 103806 / TLS) (Chlorobium tepidum).